The chain runs to 188 residues: Elongation factor P (188 aa).

This sequence belongs to the elongation factor P family.

Its subcellular location is the cytoplasm. The protein operates within protein biosynthesis; polypeptide chain elongation. Functionally, involved in peptide bond synthesis. Stimulates efficient translation and peptide-bond synthesis on native or reconstituted 70S ribosomes in vitro. Probably functions indirectly by altering the affinity of the ribosome for aminoacyl-tRNA, thus increasing their reactivity as acceptors for peptidyl transferase. This Mycoplasmoides gallisepticum (strain R(low / passage 15 / clone 2)) (Mycoplasma gallisepticum) protein is Elongation factor P.